A 162-amino-acid polypeptide reads, in one-letter code: Heat shock protein beta-6 (162 aa).

Residues 1–72 are involved in stabilization of the HSPB1:HSBP6 heterodimer; sequence MEIRVPVQPS…PTAQVPTDPG (72 aa). S16 carries the phosphoserine modification. Residue Q31 forms an Isoglutamyl lysine isopeptide (Gln-Lys) (interchain with K-162) linkage. One can recognise a sHSP domain in the interval 56 to 162; the sequence is RAPSVALPTA…ASLPSPPAAK (107 aa). Position 66 is a deamidated glutamine (Q66). S157 is modified (phosphoserine). Residue K162 forms an Isoglutamyl lysine isopeptide (Lys-Gln) (interchain with Q-31) linkage.

Belongs to the small heat shock protein (HSP20) family. Homodimer. Small heat shock proteins form high molecular mass oligomers containing variable number of monomers; these oligomers display a very flexible quaternary structure easily exchanging their subunits. Heterooligomer with HSPB1; formed through oligomerization of HSPB1:HSBP6 dimers; subunit exchange leads to formation of at least two different heterooligomeric complexes, differing in variable quantities of HSPB1 and HSPB6 homodimers in addition to HSPB1:HSPB6 heterodimers. Heterooligomer with CRYAB; large heterooligomers consist of CRYAB homodimers and HSPB5:HSPB6 heterodimers but lacking HSPB6 homodimers. Interacts with BAG3. Interacts (phosphorylated) with YWHAZ. Interacts with PDE4A and PDE4D; required for maintenance of the non-phosphorylated state of HSPB6 under basal conditions. Interacts with KDR. Interacts with PRKD1. In terms of processing, the N-terminus is blocked. Post-translationally, phosphorylated at Ser-16 by PKA and probably PKD1K; required to protect cardiomyocytes from apoptosis. In terms of tissue distribution, widely expressed. High expression in muscle tissues.

The protein localises to the cytoplasm. Its subcellular location is the nucleus. The protein resides in the secreted. In terms of biological role, small heat shock protein which functions as a molecular chaperone probably maintaining denatured proteins in a folding-competent state. Seems to have versatile functions in various biological processes. Plays a role in regulating muscle function such as smooth muscle vasorelaxation and cardiac myocyte contractility. May regulate myocardial angiogenesis implicating KDR. Overexpression mediates cardioprotection and angiogenesis after induced damage. Stabilizes monomeric YWHAZ thereby supporting YWHAZ chaperone-like activity. This chain is Heat shock protein beta-6 (Hspb6), found in Rattus norvegicus (Rat).